We begin with the raw amino-acid sequence, 348 residues long: Aminotransferase atnJ (348 aa).

Residue arginine 79 coordinates pyridoxal 5'-phosphate. Lysine 180 is modified (N6-(pyridoxal phosphate)lysine). Residue glutamate 216 coordinates pyridoxal 5'-phosphate.

This sequence belongs to the class-IV pyridoxal-phosphate-dependent aminotransferase family. It depends on pyridoxal 5'-phosphate as a cofactor.

Its pathway is secondary metabolite biosynthesis. Functionally, aminotransferase; part of the gene cluster that mediates the biosynthesis of aspercryptins, linear lipopeptides built from six amino acids including 2 highly unusual and nonproteogenic amino acids, 2-amino-octanoic acid (2aoa) and 2-amino-dodecanol (2adol). The core structure of aspercryptins is as follows: Ser/Ala-Thr-Ile/Val-2aoa-Asn-2adol. The first step of aspercryptin biosynthesis is the generation of the fatty acid precursors, octanoic and dodecanoic acids, by the FAS subunits atnF and atnM. The fatty acid precursors are likely transformed into the corresponding alpha-amino fatty acids in three steps. First, they are hydroxylated by the cytochrome P450 monooxygenase atnE, then oxidized to the corresponding alpha-keto acids by the NAD(P)-dependent oxidoreductase atnD, and finally converted to the alpha-amino fatty acids by the PLP-dependent aminotransferases atnH or atnJ. the alpha-amino fatty acids, 2-amino-octanoic and 2-amino-dodecanoic acids, are recognized, activated, and covalently tethered to the NRPS atnA by its fourth and sixth adenylation domains. The second module of atnA is the Thr module and contains an epimerase (E) domain responsible for the epimerization of Thr to D-allo-Thr. Additionally, despite atnA having only one epimerase domain, the first amino acid of aspercryptin A1 is D-Ser, suggesting that serine is either loaded directly as D-Ser on the first module or that the epimerase domain in the threonine module epimerizes both L-Ser and L-Thr. After condensation of the hexapeptide of aspercryptin, the C-terminal reductase (TE) domain might be involved in the reductive release and production of the aldehyde hexapeptide. Further reduction would generate aspercryptins. The variety of aspercryptins produced reflects the flexibility of the atnA NRPS, allowing incorporation of alanine instead of serine, valine for isoleucine, and a C10 fatty amino alcohol instead of the C12 version. AtnB seems to be involved in the selectivity for Ile versus Val by the third module. Moreover, type B, C and D aspercryptins have an additional N-terminal cichorine, acetyl and propionyl group respectively. The chain is Aminotransferase atnJ from Emericella nidulans (strain FGSC A4 / ATCC 38163 / CBS 112.46 / NRRL 194 / M139) (Aspergillus nidulans).